The chain runs to 241 residues: Uridylate kinase (241 aa).

15-18 (KLSG) serves as a coordination point for ATP. Residues 23–28 (GTEGFG) form an involved in allosteric activation by GTP region. Residue Gly57 participates in UMP binding. Residues Gly58 and Arg62 each coordinate ATP. UMP is bound by residues Asp77 and 138-145 (TGNPFFTT). Residues Thr165, Phe171, and Asp174 each coordinate ATP.

This sequence belongs to the UMP kinase family. Homohexamer.

It localises to the cytoplasm. It carries out the reaction UMP + ATP = UDP + ADP. Its pathway is pyrimidine metabolism; CTP biosynthesis via de novo pathway; UDP from UMP (UMPK route): step 1/1. With respect to regulation, allosterically activated by GTP. Inhibited by UTP. In terms of biological role, catalyzes the reversible phosphorylation of UMP to UDP. This is Uridylate kinase from Escherichia coli O139:H28 (strain E24377A / ETEC).